Consider the following 485-residue polypeptide: Alpha-amylase (485 aa).

The N-terminal stretch at 1 to 18 (MQHLSILLVVLGSSIAFA) is a signal peptide. Gln-19 carries the pyrrolidone carboxylic acid modification. A disulfide bond links Cys-46 and Cys-102. Positions 116, 163, and 172 each coordinate Ca(2+). Cysteines 152 and 165 form a disulfide. Residue Arg-200 coordinates chloride. Asp-202 functions as the Nucleophile in the catalytic mechanism. His-206 provides a ligand contact to Ca(2+). The active-site Proton donor is Glu-238. Residue Asn-301 participates in chloride binding. Cys-369 and Cys-375 are oxidised to a cystine. 2 N-linked (GlcNAc...) asparagine glycosylation sites follow: Asn-423 and Asn-449. Cysteines 440 and 452 form a disulfide.

It belongs to the glycosyl hydrolase 13 family. In terms of assembly, monomer. Ca(2+) is required as a cofactor. It depends on chloride as a cofactor.

The catalysed reaction is Endohydrolysis of (1-&gt;4)-alpha-D-glucosidic linkages in polysaccharides containing three or more (1-&gt;4)-alpha-linked D-glucose units.. Functionally, involved in the digestion of starch. This is Alpha-amylase from Hypothenemus hampei (Coffee berry borer).